A 308-amino-acid polypeptide reads, in one-letter code: B- and T-lymphocyte attenuator (308 aa).

Residues 1–29 form the signal peptide; it reads MKTVPAMLVTPRSFREFFILLLGLWSILC. The Extracellular segment spans residues 30-183; that stretch reads KEPTKRIGEE…ERPGRTWLLY (154 aa). The Ig-like V-type domain occupies 32 to 134; that stretch reads PTKRIGEECR…SANLNSEVIN (103 aa). 3 disulfides stabilise this stretch: C40–C69, C64–C124, and C78–C85. N-linked (GlcNAc...) asparagine glycosylation is found at N49, N74, N81, N148, and N165. A helical membrane pass occupies residues 184–204; sequence ALLPLGTSLLLLACVCLLCFL. Residues 205 to 308 lie on the Cytoplasmic side of the membrane; that stretch reads RRIQGKEKKP…TEYASICVRS (104 aa).

In terms of assembly, interacts with tyrosine phosphatases PTPN6/SHP-1 and PTPN11/SHP-2. Interacts with TNFRSF14/HVEM (via cysteine-rich domain 1). Phosphorylated on Tyr residues by TNFRSF14 and by antigen receptors cross-linking, both inducing association with PTPN6 and PTPN11. In terms of processing, N-glycosylated.

The protein resides in the cell membrane. Its function is as follows. Inhibitory receptor on lymphocytes that negatively regulates antigen receptor signaling via PTPN6/SHP-1 and PTPN11/SHP-2. May interact in cis (on the same cell) or in trans (on other cells) with TNFRSF14. In cis interactions, appears to play an immune regulatory role inhibiting in trans interactions in naive T cells to maintain a resting state. In trans interactions, can predominate during adaptive immune response to provide survival signals to effector T cells. The polypeptide is B- and T-lymphocyte attenuator (Rattus norvegicus (Rat)).